A 320-amino-acid chain; its full sequence is Aminoacyl tRNA synthase complex-interacting multifunctional protein 2 (320 aa).

The interval 31 to 51 (HSKTTSPATDAGHVQEPSEPS) is disordered. A Phosphoserine modification is found at S36. Residues 82–162 (TPDADLDVTN…HTHSSVKNVP (81 aa)) are interaction with PRKN. The segment at 162-225 (PENLLKCFGE…FLFSLFGQKH (64 aa)) is interaction with TP53. In terms of domain architecture, GST C-terminal spans 220-317 (LFGQKHNAVH…NLAPFSTALQ (98 aa)).

In terms of assembly, part of the multisynthetase complex (MSC), a multisubunit complex that groups tRNA ligases for Arg (RARS1), Asp (DARS1), Gln (QARS1), Ile (IARS1), Leu (LARS1), Lys (KARS1), Met (MARS1) the bifunctional ligase for Glu and Pro (EPRS1) and the auxiliary subunits AIMP1/p43, AIMP2/p38 and EEF1E1/p18. Interacts (via N-terminus) with KARS1. Interacts with EPRS1. Forms a linear complex that contains MARS1, EEF1E1, EPRS1 and AIMP2 that is at the core of the multisubunit complex. Binds FUBP1 (via C-terminus). Interacts in both its unphosphorylated and phosphorylated forms with p53/TP53 (via N-terminus) in the nucleus following UV irradiation. Interacts (via N-terminus) with PRKN/parkin (via first RING-type domain). Interacts with TARS3. Phosphorylated on serine residues in response to UV irradiation. In terms of processing, ubiquitinated by PRKN, leading to its degradation by the proteasome.

It is found in the cytoplasm. Its subcellular location is the cytosol. The protein localises to the nucleus. Functionally, required for assembly and stability of the aminoacyl-tRNA synthase complex. Mediates ubiquitination and degradation of FUBP1, a transcriptional activator of MYC, leading to MYC down-regulation which is required for aveolar type II cell differentiation. Blocks MDM2-mediated ubiquitination and degradation of p53/TP53. Functions as a proapoptotic factor. This is Aminoacyl tRNA synthase complex-interacting multifunctional protein 2 (Aimp2) from Rattus norvegicus (Rat).